The following is a 411-amino-acid chain: Dual-specificity RNA methyltransferase RlmN (411 aa).

The active-site Proton acceptor is the glutamate 125. The Radical SAM core domain maps to glutamate 131–leucine 380. A disulfide bridge connects residues cysteine 138 and cysteine 383. [4Fe-4S] cluster is bound by residues cysteine 145, cysteine 149, and cysteine 152. S-adenosyl-L-methionine contacts are provided by residues glycine 209–glutamate 210, serine 241, serine 263–histidine 265, and asparagine 340. Cysteine 383 functions as the S-methylcysteine intermediate in the catalytic mechanism.

This sequence belongs to the radical SAM superfamily. RlmN family. [4Fe-4S] cluster serves as cofactor.

Its subcellular location is the cytoplasm. The enzyme catalyses adenosine(2503) in 23S rRNA + 2 reduced [2Fe-2S]-[ferredoxin] + 2 S-adenosyl-L-methionine = 2-methyladenosine(2503) in 23S rRNA + 5'-deoxyadenosine + L-methionine + 2 oxidized [2Fe-2S]-[ferredoxin] + S-adenosyl-L-homocysteine. It catalyses the reaction adenosine(37) in tRNA + 2 reduced [2Fe-2S]-[ferredoxin] + 2 S-adenosyl-L-methionine = 2-methyladenosine(37) in tRNA + 5'-deoxyadenosine + L-methionine + 2 oxidized [2Fe-2S]-[ferredoxin] + S-adenosyl-L-homocysteine. Functionally, specifically methylates position 2 of adenine 2503 in 23S rRNA and position 2 of adenine 37 in tRNAs. m2A2503 modification seems to play a crucial role in the proofreading step occurring at the peptidyl transferase center and thus would serve to optimize ribosomal fidelity. The chain is Dual-specificity RNA methyltransferase RlmN from Brucella anthropi (strain ATCC 49188 / DSM 6882 / CCUG 24695 / JCM 21032 / LMG 3331 / NBRC 15819 / NCTC 12168 / Alc 37) (Ochrobactrum anthropi).